Here is a 444-residue protein sequence, read N- to C-terminus: Deoxyguanosinetriphosphate triphosphohydrolase-like protein (444 aa).

The tract at residues 1–28 is disordered; that stretch reads MTDAVWNERRLGEDKQRRNDHRSPYQRD. The region spanning 59 to 250 is the HD domain; sequence RLTHSLEVSQ…MELADDIAYA (192 aa).

Belongs to the dGTPase family. Type 2 subfamily.

The polypeptide is Deoxyguanosinetriphosphate triphosphohydrolase-like protein (Shewanella pealeana (strain ATCC 700345 / ANG-SQ1)).